Here is a 428-residue protein sequence, read N- to C-terminus: Cytochrome c biogenesis protein CcsB (428 aa).

The next 3 membrane-spanning stretches (helical) occupy residues 14 to 34 (LRFA…GTFI), 72 to 92 (SIWF…CSFR), and 162 to 182 (IGPL…AYGS).

It belongs to the Ccs1/CcsB family. May interact with CcsA.

It is found in the cellular thylakoid membrane. Required during biogenesis of c-type cytochromes (cytochrome c6 and cytochrome f) at the step of heme attachment. This is Cytochrome c biogenesis protein CcsB from Prochlorococcus marinus (strain MIT 9312).